The following is a 517-amino-acid chain: U3 small nucleolar RNA-associated protein 15 homolog (517 aa).

7 WD repeats span residues 36–75 (KEFGAVSKIDFSPLPPHNYAVTASTRVHIYGLHSQEPIRN), 78–117 (RFHDTAYGGSFRGDGKLLVAGSEEGLIRLFDIGGRVSLRQ), 120–159 (GHSKAVHATSFLSDGFRVLSGSDDLTCRVWDVASAVELSS), 162–202 (EHTD…SVMT), 204–242 (QHGQPVECVLLYPSEALLVSTGGRYVKVWDLLKGGQQLV), 246–285 (NHHKTVTCACLSSSNKLLTASLDRHVKVYNSSYKVVHNFD), and 287–324 (ASSILSLAVAPDDEAVAVGMTNGVLSIRHRKHKEEKEA).

As to quaternary structure, part of the small subunit (SSU) processome, composed of more than 70 proteins and the RNA chaperone small nucleolar RNA (snoRNA) U3. May be a component of the proposed t-UTP subcomplex of the ribosomal small subunit (SSU) processome.

It localises to the nucleus. Its subcellular location is the nucleolus. Ribosome biogenesis factor. Involved in nucleolar processing of pre-18S ribosomal RNA. Required for optimal pre-ribosomal RNA transcription by RNA polymerase I. Part of the small subunit (SSU) processome, first precursor of the small eukaryotic ribosomal subunit. During the assembly of the SSU processome in the nucleolus, many ribosome biogenesis factors, an RNA chaperone and ribosomal proteins associate with the nascent pre-rRNA and work in concert to generate RNA folding, modifications, rearrangements and cleavage as well as targeted degradation of pre-ribosomal RNA by the RNA exosome. This is U3 small nucleolar RNA-associated protein 15 homolog (utp15) from Danio rerio (Zebrafish).